The following is a 101-amino-acid chain: U-scoloptoxin(10)-Sm2a (101 aa).

A signal peptide spans 1 to 23; it reads MNKSMIILCAVLFLTYIIEENEA.

It belongs to the scoloptoxin-10 family. Contains 3 disulfide bonds. As to expression, expressed by the venom gland.

It localises to the secreted. This Scolopendra morsitans (Tanzanian blue ringleg centipede) protein is U-scoloptoxin(10)-Sm2a.